We begin with the raw amino-acid sequence, 131 residues long: MFDGIGFMELLLIGILGLVVLGPERLPTAVRSISSWIRAMKKMANSVKDELEQELKIEQLHSDLKNAESQGLKNLSPELQDSIDQLKEAAQSVNRPYQVEDVPAAKETPAKETPTAEKSTTTGANSDKPNG.

The helical transmembrane segment at 2 to 22 (FDGIGFMELLLIGILGLVVLG) threads the bilayer. 2 stretches are compositionally biased toward polar residues: residues 68 to 83 (ESQG…QDSI) and 116 to 131 (AEKS…KPNG). The tract at residues 68–131 (ESQGLKNLSP…TGANSDKPNG (64 aa)) is disordered.

Belongs to the TatB family. As to quaternary structure, the Tat system comprises two distinct complexes: a TatABC complex, containing multiple copies of TatA, TatB and TatC subunits, and a separate TatA complex, containing only TatA subunits. Substrates initially bind to the TatABC complex, which probably triggers association of the separate TatA complex to form the active translocon.

It is found in the cell inner membrane. In terms of biological role, part of the twin-arginine translocation (Tat) system that transports large folded proteins containing a characteristic twin-arginine motif in their signal peptide across membranes. Together with TatC, TatB is part of a receptor directly interacting with Tat signal peptides. TatB may form an oligomeric binding site that transiently accommodates folded Tat precursor proteins before their translocation. The polypeptide is Sec-independent protein translocase protein TatB (Shewanella pealeana (strain ATCC 700345 / ANG-SQ1)).